The chain runs to 163 residues: uncharacterized protein (163 aa).

This is an uncharacterized protein from Haemophilus phage HP1 (strain HP1c1) (Bacteriophage HP1).